A 139-amino-acid polypeptide reads, in one-letter code: Large ribosomal subunit protein bL20 (139 aa).

Belongs to the bacterial ribosomal protein bL20 family.

Its function is as follows. Binds directly to 23S ribosomal RNA and is necessary for the in vitro assembly process of the 50S ribosomal subunit. It is not involved in the protein synthesizing functions of that subunit. In Leuconostoc mesenteroides subsp. mesenteroides (strain ATCC 8293 / DSM 20343 / BCRC 11652 / CCM 1803 / JCM 6124 / NCDO 523 / NBRC 100496 / NCIMB 8023 / NCTC 12954 / NRRL B-1118 / 37Y), this protein is Large ribosomal subunit protein bL20.